We begin with the raw amino-acid sequence, 1838 residues long: Collagen alpha-1(V) chain (1838 aa).

The first 37 residues, 1–37 (MDVHTRWKARSALRPGAPLLPPLLLLLLWAPPPSRAA), serve as a signal peptide directing secretion. Residues 72–244 (DVAYRVTKDA…DYCEHYSPDC (173 aa)) form the Laminin G-like domain. Positions 231 to 443 (RAAYDYCEHY…MPANQDTIYE (213 aa)) are nonhelical region. A sulfotyrosine mark is found at tyrosine 234, tyrosine 236, tyrosine 240, tyrosine 262, and tyrosine 263. Disordered regions lie at residues 242 to 269 (PDCD…GDGE), 281 to 457 (EDPE…QKGE), 470 to 520 (PPGP…GTML), 526 to 545 (FGGG…QESQ), and 559 to 1574 (GPAG…EVIQ). The segment covering 258 to 269 (NPDEYYTEGDGE) has biased composition (acidic residues). A compositionally biased stretch (basic and acidic residues) spans 285–304 (DLGKEPTPSKKPVEAAKETT). The segment covering 309–323 (ELTPTPTEAAPMPET) has biased composition (low complexity). Residues tyrosine 338, tyrosine 340, tyrosine 346, and tyrosine 347 each carry the sulfotyrosine modification. Over residues 377-388 (PTSTADTSNSSN) the composition is skewed to polar residues. Residues 396–406 (GADDLEGEFTE) show a composition bias toward acidic residues. Sulfotyrosine occurs at positions 416, 417, 420, and 421. Residues 417–428 (YDPYYDPTSSPS) show a composition bias toward low complexity. The interval 444 to 558 (GIGGPRGEKG…ILQQARLALR (115 aa)) is interrupted collagenous region. Residues 470-485 (PPGPEGPAGLPGPPGT) show a composition bias toward pro residues. Over residues 506–520 (LPGADGLPGPPGTML) the composition is skewed to low complexity. A triple-helical region region spans residues 559 to 1570 (GPAGPMGLTG…GPPGPPGPPG (1012 aa)). Hydroxyproline occurs at positions 570 and 576. Positions 587-597 (DVGPQGPRGVQ) are enriched in low complexity. Position 621 is a hydroxyproline (proline 621). Position 627 is a 5-hydroxylysine (lysine 627). Residue proline 639 is modified to Hydroxyproline. Lysine 642 is subject to 5-hydroxylysine. Hydroxyproline is present on residues proline 648, proline 654, proline 657, proline 675, and proline 678. Residues 671 to 686 (PRGLPGEPGPRGLLGP) are compositionally biased toward low complexity. Position 687 is a 5-hydroxylysine (lysine 687). Pro residues predominate over residues 687-696 (KGPPGPPGPP). Residues proline 690, proline 696, and proline 705 each carry the hydroxyproline modification. A 5-hydroxylysine modification is found at lysine 708. Residues proline 717, proline 720, proline 726, and proline 732 each carry the hydroxyproline modification. The segment covering 722–741 (QQGNPGAQGLPGPQGAIGPP) has biased composition (low complexity). The residue at position 744 (lysine 744) is a 5-hydroxylysine. Low complexity predominate over residues 747–756 (LGKPGLPGMP). A hydroxyproline mark is found at proline 750, proline 756, proline 762, proline 765, and proline 771. The residue at position 774 (lysine 774) is a 5-hydroxylysine. A hydroxyproline mark is found at proline 780 and proline 789. A 5-hydroxylysine mark is found at lysine 795, lysine 804, lysine 807, and lysine 810. Proline 816 bears the Hydroxyproline mark. Lysine 819 carries the post-translational modification 5-hydroxylysine. Hydroxyproline is present on proline 834. A compositionally biased stretch (basic and acidic residues) spans 837 to 846 (RGEDGPEGPK). Lysine 846 bears the 5-hydroxylysine mark. A Hydroxyproline modification is found at proline 861. At lysine 864 the chain carries 5-hydroxylysine. Positions 867-876 (LGVPGLPGYP) are enriched in low complexity. Residues proline 870, proline 873, and proline 876 each carry the hydroxyproline modification. The residue at position 882 (lysine 882) is a 5-hydroxylysine. Residues proline 888 and proline 891 each carry the hydroxyproline modification. The residue at position 897 (lysine 897) is a 5-hydroxylysine. Residues proline 903 and proline 906 each carry the hydroxyproline modification. Positions 908–917 (PRGQRGPTGP) are enriched in low complexity. Hydroxyproline occurs at positions 930 and 945. Composition is skewed to low complexity over residues 971–990 (KDGL…QGKT) and 999–1011 (VGPQ…TGPM). 4 positions are modified to hydroxyproline: proline 1017, proline 1020, proline 1023, and proline 1029. Residues 1088–1104 (SPGERGPAGAAGPIGIP) show a composition bias toward low complexity. Residues 1106 to 1115 (RPGPQGPPGP) are compositionally biased toward pro residues. Residues 1116–1140 (AGEKGAPGEKGPQGPAGRDGLQGPV) are compositionally biased toward low complexity. Hydroxyproline is present on residues proline 1221 and proline 1224. The span at 1259-1268 (PSGAPGADGP) shows a compositional bias: low complexity. Pro residues-rich tracts occupy residues 1380 to 1398 (TGEP…PGPA) and 1454 to 1469 (SPGP…PPGL). 2 positions are modified to hydroxyproline: proline 1467 and proline 1470. Residues 1485 to 1494 (PGLIGLIGPP) show a composition bias toward low complexity. Residues 1526-1541 (PIGPPGPPGLPGPPGP) show a composition bias toward pro residues. The span at 1542–1554 (KGAKGSSGPTGPK) shows a compositional bias: low complexity. A compositionally biased stretch (pro residues) spans 1560–1569 (PGPPGPPGPP). The tract at residues 1571–1605 (EVIQPLPIQASRTRRNIDASQLLDDGNGENYVDYA) is nonhelical region. Sulfotyrosine is present on residues tyrosine 1601 and tyrosine 1604. Positions 1606–1838 (DGMEEIFGSL…FEVGPACFMG (233 aa)) are cleaved as a propeptide — C-terminal propeptide. The 229-residue stretch at 1609-1837 (EEIFGSLNSL…GFEVGPACFM (229 aa)) folds into the Fibrillar collagen NC1 domain. 3 cysteine pairs are disulfide-bonded: cysteine 1639–cysteine 1671, cysteine 1680–cysteine 1835, and cysteine 1746–cysteine 1789. Residues aspartate 1657, asparagine 1659, glutamine 1660, cysteine 1662, and aspartate 1665 each contribute to the Ca(2+) site.

The protein belongs to the fibrillar collagen family. Trimers of two alpha 1(V) and one alpha 2(V) chains in most tissues and trimers of one alpha 1(V), one alpha 2(V), and one alpha 3(V) chains in placenta. Interacts with CSPG4. In terms of processing, prolines at the third position of the tripeptide repeating unit (G-X-Y) are hydroxylated in some or all of the chains. Post-translationally, sulfated on 40% of tyrosines.

Its subcellular location is the secreted. The protein resides in the extracellular space. It localises to the extracellular matrix. In terms of biological role, type V collagen is a member of group I collagen (fibrillar forming collagen). It is a minor connective tissue component of nearly ubiquitous distribution. Type V collagen binds to DNA, heparan sulfate, thrombospondin, heparin, and insulin. The protein is Collagen alpha-1(V) chain (COL5A1) of Homo sapiens (Human).